Reading from the N-terminus, the 198-residue chain is Mediator of RNA polymerase II transcription subunit 22 (198 aa).

The segment at 159–198 is disordered; it reads WGSPEMTSDPSHANHEVSDHLGSQESMQRHRNGSGTSEQS.

It belongs to the Mediator complex subunit 22 family. Component of the Mediator complex.

It is found in the nucleus. In terms of biological role, component of the Mediator complex, a coactivator involved in the regulated transcription of nearly all RNA polymerase II-dependent genes. Mediator functions as a bridge to convey information from gene-specific regulatory proteins to the basal RNA polymerase II transcription machinery. Mediator is recruited to promoters by direct interactions with regulatory proteins and serves as a scaffold for the assembly of a functional preinitiation complex with RNA polymerase II and the general transcription factors. The polypeptide is Mediator of RNA polymerase II transcription subunit 22 (med22) (Danio rerio (Zebrafish)).